Consider the following 957-residue polypeptide: Plasma membrane ATPase 1 (957 aa).

Over 1–66 (MGEEKPEVLD…EKKDSKLLKF (66 aa)) the chain is Cytoplasmic. Residues 67–86 (LGFMWNPLSWVMEAAAIMAI) form a helical membrane-spanning segment. Topologically, residues 87-98 (ALANGGGKPPDW) are extracellular. The chain crosses the membrane as a helical span at residues 99 to 119 (QDFVGIITLLIINSTISFIEE). At 120-248 (NNAGNAAAAL…GHFQKVLTAI (129 aa)) the chain is on the cytoplasmic side. A helical transmembrane segment spans residues 249-269 (GNFCICSIAVGMIIEIIVMYP). The Extracellular portion of the chain corresponds to 270 to 279 (IQHRAYRPGI). Residues 280-301 (DNLLVLLIGGIPIAMPTVLSVT) traverse the membrane as a helical segment. At 302-648 (MAIGSHRLAQ…TSRAIFQRMK (347 aa)) the chain is on the cytoplasmic side. Asp-334 functions as the 4-aspartylphosphate intermediate in the catalytic mechanism. Asp-593 and Asp-597 together coordinate Mg(2+). The chain crosses the membrane as a helical span at residues 649–670 (NYTIYAVSITIRIVLGFMLLAL). Over 671–675 (IWKFD) the chain is Extracellular. Residues 676–698 (FPPFMVLIIAILNDGTIMTISKD) traverse the membrane as a helical segment. Over 699 to 714 (RVKPSPLPDSWKLAEI) the chain is Cytoplasmic. Residues 715–735 (FTTGIVLGGYLAMMTVIFFWA) form a helical membrane-spanning segment. Over 736 to 760 (AYKTNFFPHVFGVSTLEKTATDDFR) the chain is Extracellular. The chain crosses the membrane as a helical span at residues 761–781 (KLASAIYLQVSIISQALIFVT). At 782 to 793 (RSRSWSFVERPG) the chain is on the cytoplasmic side. Residues 794 to 814 (FLLVIAFVIAQLVATLIAVYA) form a helical membrane-spanning segment. Residues 815-823 (NWSFAAIEG) are Extracellular-facing. Residues 824–844 (IGWGWAGVIWIYNLVFYIPLD) traverse the membrane as a helical segment. Topologically, residues 845 to 957 (IIKFFIRYAL…IETIQQAYTV (113 aa)) are cytoplasmic.

Belongs to the cation transport ATPase (P-type) (TC 3.A.3) family. Type IIIA subfamily. As to expression, expressed in roots, stems, leaves from both vegetative and flowering plants, and flowers at early and late stages of development with highest expression levels found in flowers and stem.

It localises to the cell membrane. It carries out the reaction ATP + H2O + H(+)(in) = ADP + phosphate + 2 H(+)(out). In terms of biological role, the plasma membrane ATPase of plants and fungi is a hydrogen ion pump. The proton gradient it generates drives the active transport of nutrients by H(+)-symport. The resulting external acidification and/or internal alkinization may mediate growth responses. This chain is Plasma membrane ATPase 1 (PMA1), found in Nicotiana plumbaginifolia (Leadwort-leaved tobacco).